The sequence spans 327 residues: Tetraacyldisaccharide 4'-kinase (327 aa).

52–59 (TLGGAGKT) provides a ligand contact to ATP.

This sequence belongs to the LpxK family.

It carries out the reaction a lipid A disaccharide + ATP = a lipid IVA + ADP + H(+). It functions in the pathway glycolipid biosynthesis; lipid IV(A) biosynthesis; lipid IV(A) from (3R)-3-hydroxytetradecanoyl-[acyl-carrier-protein] and UDP-N-acetyl-alpha-D-glucosamine: step 6/6. In terms of biological role, transfers the gamma-phosphate of ATP to the 4'-position of a tetraacyldisaccharide 1-phosphate intermediate (termed DS-1-P) to form tetraacyldisaccharide 1,4'-bis-phosphate (lipid IVA). This Methylorubrum extorquens (strain CM4 / NCIMB 13688) (Methylobacterium extorquens) protein is Tetraacyldisaccharide 4'-kinase.